A 412-amino-acid chain; its full sequence is NAD-dependent dihydropyrimidine dehydrogenase subunit PreT (412 aa).

Position 286 (glutamate 286) interacts with NAD(+).

Belongs to the NADH dehydrogenase family. As to quaternary structure, heterotetramer of 2 PreA and 2 PreT subunits.

It carries out the reaction 5,6-dihydrouracil + NAD(+) = uracil + NADH + H(+). The catalysed reaction is 5,6-dihydrothymine + NAD(+) = thymine + NADH + H(+). Functionally, involved in pyrimidine base degradation. Catalyzes physiologically the reduction of uracil to 5,6-dihydrouracil (DHU) by using NADH as a specific cosubstrate. It also catalyzes the reverse reaction and the reduction of thymine to 5,6-dihydrothymine (DHT). The polypeptide is NAD-dependent dihydropyrimidine dehydrogenase subunit PreT (preT) (Escherichia coli O157:H7).